The following is a 445-amino-acid chain: 2-oxoisovalerate dehydrogenase subunit alpha, mitochondrial (445 aa).

A mitochondrion-targeting transit peptide spans 1–45 (MAVAIAAARVWRLNRGLSQAALLLLRRPGARGLARSHPRRQQQQF). A disordered region spans residues 33 to 54 (LARSHPRRQQQQFSSLDDKPQF). Tyrosine 158 and arginine 159 together coordinate thiamine diphosphate. Serine 206 contributes to the K(+) binding site. Serine 207 contacts thiamine diphosphate. Proline 208, threonine 211, and glutamine 212 together coordinate K(+). Glutamate 238 provides a ligand contact to Mg(2+). 3 residues coordinate thiamine diphosphate: glycine 239, alanine 240, and arginine 265. Positions 267 and 269 each coordinate Mg(2+). Residue histidine 336 participates in thiamine diphosphate binding. Residue serine 337 is modified to Phosphoserine; by BCKDK. Position 338 is a phosphothreonine (threonine 338). Serine 339 and serine 347 each carry phosphoserine. At lysine 356 the chain carries N6-acetyllysine; alternate. N6-succinyllysine; alternate is present on lysine 356. An N6-succinyllysine modification is found at lysine 380.

It belongs to the BCKDHA family. In terms of assembly, heterotetramer of 2 alpha/BCKDHA and 2 beta chains/BCKDHB that forms the branched-chain alpha-keto acid decarboxylase (E1) component of the BCKD complex. The branched-chain alpha-ketoacid dehydrogenase is a large complex composed of three major building blocks E1, E2 and E3. It is organized around E2, a 24-meric cubic core composed of DBT, to which are associated 6 to 12 copies of E1, and approximately 6 copies of the dehydrogenase E3, a DLD dimer. Interacts with PPM1K. Thiamine diphosphate is required as a cofactor. It depends on Mg(2+) as a cofactor. In terms of processing, phosphorylated at Ser-337 by BCKDK and dephosphorylated by protein phosphatase PPM1K.

The protein localises to the mitochondrion matrix. The catalysed reaction is N(6)-[(R)-lipoyl]-L-lysyl-[protein] + 3-methyl-2-oxobutanoate + H(+) = N(6)-[(R)-S(8)-2-methylpropanoyldihydrolipoyl]-L-lysyl-[protein] + CO2. Its function is as follows. Together with BCKDHB forms the heterotetrameric E1 subunit of the mitochondrial branched-chain alpha-ketoacid dehydrogenase (BCKD) complex. The BCKD complex catalyzes the multi-step oxidative decarboxylation of alpha-ketoacids derived from the branched-chain amino-acids valine, leucine and isoleucine producing CO2 and acyl-CoA which is subsequently utilized to produce energy. The E1 subunit catalyzes the first step with the decarboxylation of the alpha-ketoacid forming an enzyme-product intermediate. A reductive acylation mediated by the lipoylamide cofactor of E2 extracts the acyl group from the E1 active site for the next step of the reaction. This is 2-oxoisovalerate dehydrogenase subunit alpha, mitochondrial (BCKDHA) from Pan troglodytes (Chimpanzee).